Reading from the N-terminus, the 221-residue chain is MAKAIFITATGTDIGKTYVSGLIAKHMKDKGLNIGYYKAALSGSLDITDSDAWYVKQQADLLDSYDEMVSYTYKHAYSPHLAAQIEGNPPDIKVIKNAYENINKKHDYMIVEGSGGIICPIRYDNNQKIFLEDIIKELNIPSLIIADAGLGTINSAVLTIEYMRSKNLKVNGVILNRFEMANEMHDDNKKMIEEMTGVKIIGIVIDGILKLDEKNIETLFE.

ATP is bound at residue 13–18 (DIGKTY). Thr17 serves as a coordination point for Mg(2+). Lys38 is an active-site residue. Substrate is bound at residue Ser42. ATP contacts are provided by residues Asp51, 112–115 (EGSG), and 176–177 (NR). Mg(2+)-binding residues include Asp51 and Glu112.

Belongs to the dethiobiotin synthetase family. As to quaternary structure, homodimer. Mg(2+) is required as a cofactor.

Its subcellular location is the cytoplasm. It catalyses the reaction (7R,8S)-7,8-diammoniononanoate + CO2 + ATP = (4R,5S)-dethiobiotin + ADP + phosphate + 3 H(+). Its pathway is cofactor biosynthesis; biotin biosynthesis; biotin from 7,8-diaminononanoate: step 1/2. Functionally, catalyzes a mechanistically unusual reaction, the ATP-dependent insertion of CO2 between the N7 and N8 nitrogen atoms of 7,8-diaminopelargonic acid (DAPA, also called 7,8-diammoniononanoate) to form a ureido ring. In Brachyspira hyodysenteriae (strain ATCC 49526 / WA1), this protein is ATP-dependent dethiobiotin synthetase BioD.